The sequence spans 214 residues: Heat shock 70 kDa protein cognate 1 (214 aa).

The protein belongs to the heat shock protein 70 family.

The chain is Heat shock 70 kDa protein cognate 1 (Hsc70-1) from Drosophila simulans (Fruit fly).